Here is a 100-residue protein sequence, read N- to C-terminus: Large ribosomal subunit protein uL23 (100 aa).

It belongs to the universal ribosomal protein uL23 family. In terms of assembly, part of the 50S ribosomal subunit. Contacts protein L29, and trigger factor when it is bound to the ribosome.

Functionally, one of the early assembly proteins it binds 23S rRNA. One of the proteins that surrounds the polypeptide exit tunnel on the outside of the ribosome. Forms the main docking site for trigger factor binding to the ribosome. The chain is Large ribosomal subunit protein uL23 from Acaryochloris marina (strain MBIC 11017).